Here is a 267-residue protein sequence, read N- to C-terminus: tRNA pseudouridine synthase A (267 aa).

D51 serves as the catalytic Nucleophile. Y109 lines the substrate pocket.

The protein belongs to the tRNA pseudouridine synthase TruA family. Homodimer.

The catalysed reaction is uridine(38/39/40) in tRNA = pseudouridine(38/39/40) in tRNA. Functionally, formation of pseudouridine at positions 38, 39 and 40 in the anticodon stem and loop of transfer RNAs. This Staphylococcus epidermidis (strain ATCC 12228 / FDA PCI 1200) protein is tRNA pseudouridine synthase A.